The sequence spans 308 residues: Transaldolase (308 aa).

The active-site Schiff-base intermediate with substrate is lysine 125.

It belongs to the transaldolase family. Type 1 subfamily. As to quaternary structure, homodimer.

It is found in the cytoplasm. The enzyme catalyses D-sedoheptulose 7-phosphate + D-glyceraldehyde 3-phosphate = D-erythrose 4-phosphate + beta-D-fructose 6-phosphate. The protein operates within carbohydrate degradation; pentose phosphate pathway; D-glyceraldehyde 3-phosphate and beta-D-fructose 6-phosphate from D-ribose 5-phosphate and D-xylulose 5-phosphate (non-oxidative stage): step 2/3. Transaldolase is important for the balance of metabolites in the pentose-phosphate pathway. This Pseudomonas savastanoi pv. phaseolicola (strain 1448A / Race 6) (Pseudomonas syringae pv. phaseolicola (strain 1448A / Race 6)) protein is Transaldolase.